Consider the following 115-residue polypeptide: Large ribosomal subunit protein bL19 (115 aa).

Belongs to the bacterial ribosomal protein bL19 family.

This protein is located at the 30S-50S ribosomal subunit interface and may play a role in the structure and function of the aminoacyl-tRNA binding site. The chain is Large ribosomal subunit protein bL19 from Francisella tularensis subsp. tularensis (strain WY96-3418).